We begin with the raw amino-acid sequence, 381 residues long: Sulfate/thiosulfate import ATP-binding protein CysA (381 aa).

The ABC transporter domain occupies isoleucine 3–serine 233. Glycine 35–serine 42 provides a ligand contact to ATP.

It belongs to the ABC transporter superfamily. Sulfate/tungstate importer (TC 3.A.1.6) family.

It localises to the plastid. Its subcellular location is the chloroplast. The enzyme catalyses sulfate(out) + ATP + H2O = sulfate(in) + ADP + phosphate + H(+). The catalysed reaction is thiosulfate(out) + ATP + H2O = thiosulfate(in) + ADP + phosphate + H(+). Functionally, part of the ABC transporter complex involved in sulfate/thiosulfate import. Responsible for energy coupling to the transport system. This is Sulfate/thiosulfate import ATP-binding protein CysA from Anthoceros angustus (Hornwort).